We begin with the raw amino-acid sequence, 203 residues long: ATP-dependent Clp protease proteolytic subunit 1 (203 aa).

Residue S102 is the Nucleophile of the active site. H127 is a catalytic residue.

The protein belongs to the peptidase S14 family. As to quaternary structure, fourteen ClpP subunits assemble into 2 heptameric rings which stack back to back to give a disk-like structure with a central cavity, resembling the structure of eukaryotic proteasomes.

It localises to the cytoplasm. It catalyses the reaction Hydrolysis of proteins to small peptides in the presence of ATP and magnesium. alpha-casein is the usual test substrate. In the absence of ATP, only oligopeptides shorter than five residues are hydrolyzed (such as succinyl-Leu-Tyr-|-NHMec, and Leu-Tyr-Leu-|-Tyr-Trp, in which cleavage of the -Tyr-|-Leu- and -Tyr-|-Trp bonds also occurs).. Cleaves peptides in various proteins in a process that requires ATP hydrolysis. Has a chymotrypsin-like activity. Plays a major role in the degradation of misfolded proteins. The sequence is that of ATP-dependent Clp protease proteolytic subunit 1 from Rhizobium johnstonii (strain DSM 114642 / LMG 32736 / 3841) (Rhizobium leguminosarum bv. viciae).